Reading from the N-terminus, the 363-residue chain is Class I histocompatibility antigen, Gogo-B*0201 alpha chain (363 aa).

A signal peptide spans 1–24 (MQVTAPRTLLLLLSAALALTETWA). The tract at residues 25–114 (GSHSMRYFHT…LRGYYNQSED (90 aa)) is alpha-1. Over 25-308 (GSHSMRYFHT…EPSSQSTIPI (284 aa)) the chain is Extracellular. The N-linked (GlcNAc...) asparagine glycan is linked to Asn110. The interval 115–206 (GSHTIQRMYG…ENGKETLQRA (92 aa)) is alpha-2. Intrachain disulfides connect Cys125-Cys188 and Cys227-Cys283. The segment at 207–298 (DPPKTHVTHH…GLPEPLTLRW (92 aa)) is alpha-3. The Ig-like C1-type domain occupies 209–297 (PKTHVTHHPI…EGLPEPLTLR (89 aa)). Residues 299 to 308 (EPSSQSTIPI) are connecting peptide. A helical transmembrane segment spans residues 309–333 (VGIVAGLAVLVVTVAVVAVVAAVMC). Residues 334 to 363 (RRKSSGGKGGSYSQAASSDSAQGSDVSLTA) are Cytoplasmic-facing. A disordered region spans residues 336–363 (KSSGGKGGSYSQAASSDSAQGSDVSLTA). Residues 344–363 (SYSQAASSDSAQGSDVSLTA) are compositionally biased toward low complexity.

The protein belongs to the MHC class I family. As to quaternary structure, heterodimer of an alpha chain and a beta chain (beta-2-microglobulin).

It localises to the membrane. Involved in the presentation of foreign antigens to the immune system. The sequence is that of Class I histocompatibility antigen, Gogo-B*0201 alpha chain from Gorilla gorilla gorilla (Western lowland gorilla).